A 368-amino-acid polypeptide reads, in one-letter code: Phospho-N-acetylmuramoyl-pentapeptide-transferase (368 aa).

Helical transmembrane passes span 30–50 (AAAI…IRYL), 72–92 (LPTM…LLWS), 98–118 (HVWL…IDDY), 139–159 (VALG…SVLM), 170–190 (LTID…TALS), 208–228 (AIVV…VYAT), 238–258 (GGEI…FLWF), 264–286 (EIFM…ALLI), and 345–365 (KIVI…LMTL).

It belongs to the glycosyltransferase 4 family. MraY subfamily. Requires Mg(2+) as cofactor.

The protein localises to the cell inner membrane. The enzyme catalyses UDP-N-acetyl-alpha-D-muramoyl-L-alanyl-gamma-D-glutamyl-meso-2,6-diaminopimeloyl-D-alanyl-D-alanine + di-trans,octa-cis-undecaprenyl phosphate = di-trans,octa-cis-undecaprenyl diphospho-N-acetyl-alpha-D-muramoyl-L-alanyl-D-glutamyl-meso-2,6-diaminopimeloyl-D-alanyl-D-alanine + UMP. Its pathway is cell wall biogenesis; peptidoglycan biosynthesis. Its function is as follows. Catalyzes the initial step of the lipid cycle reactions in the biosynthesis of the cell wall peptidoglycan: transfers peptidoglycan precursor phospho-MurNAc-pentapeptide from UDP-MurNAc-pentapeptide onto the lipid carrier undecaprenyl phosphate, yielding undecaprenyl-pyrophosphoryl-MurNAc-pentapeptide, known as lipid I. In Chlorobium luteolum (strain DSM 273 / BCRC 81028 / 2530) (Pelodictyon luteolum), this protein is Phospho-N-acetylmuramoyl-pentapeptide-transferase.